The following is a 453-amino-acid chain: Trypanin (453 aa).

Over residues Met-1–Gly-10 the composition is skewed to basic and acidic residues. Residues Met-1–Val-22 form a disordered region. Coiled-coil stretches lie at residues Thr-60–Val-156 and Ser-185–Glu-377.

This sequence belongs to the DRC4 family.

The protein localises to the cytoplasm. Its subcellular location is the cytoskeleton. The protein resides in the cell projection. It is found in the cilium. It localises to the flagellum. In terms of biological role, cytoskeletal linker that plays a central role in the flagellum cell motility. Required for directional cell motility. Plays a role as part of a dynein regulatory system that regulates flagellar beat in response to signals from the central pair apparatus and radial spokes in procyclic cells. Also plays an essential role in the bloodstream form of the trypanosomes as its silencing is lethal for the circulating form. In Trypanosoma brucei rhodesiense, this protein is Trypanin.